The sequence spans 160 residues: Snaclec subunit A (160 aa).

The N-terminal stretch at 1-23 (MGRFILVNLGLLVVAFSLRGSEA) is a signal peptide. Intrachain disulfides connect Cys25–Cys36, Cys53–Cys150, and Cys125–Cys142. Residues 32 to 151 (YDKYCYKVFD…CDFTLPFICK (120 aa)) enclose the C-type lectin domain.

Belongs to the snaclec family. As to quaternary structure, heterodimer of subunits A and B; disulfide-linked. Expressed by the venom gland.

Its subcellular location is the secreted. Functionally, interferes with one step of hemostasis (modulation of platelet aggregation, or coagulation cascade, for example). This is Snaclec subunit A from Philodryas olfersii (Green snake).